The primary structure comprises 186 residues: MQTGKLIVLTGPSGVGKGTLLSCLLHRHPGLAFSVSVTTRSPRPGEVEGKSYFFVDHDQFREMIESEELLEWAEYAGNFYGTPRVPVIENIEQGRSMILEIELQGARQIQRTFPDALRIFILPPSMAELEERLWGRGQDSEEAITKRLQRATEELEAATEFDIQLVNDSIEDTLQNLDKILFHFRE.

The 179-residue stretch at 4–182 (GKLIVLTGPS…TLQNLDKILF (179 aa)) folds into the Guanylate kinase-like domain. 11–18 (GPSGVGKG) contacts ATP.

This sequence belongs to the guanylate kinase family.

It is found in the cytoplasm. It catalyses the reaction GMP + ATP = GDP + ADP. In terms of biological role, essential for recycling GMP and indirectly, cGMP. The protein is Guanylate kinase of Trichodesmium erythraeum (strain IMS101).